The following is a 374-amino-acid chain: Aminomethyltransferase (374 aa).

It belongs to the GcvT family. As to quaternary structure, the glycine cleavage system is composed of four proteins: P, T, L and H.

It catalyses the reaction N(6)-[(R)-S(8)-aminomethyldihydrolipoyl]-L-lysyl-[protein] + (6S)-5,6,7,8-tetrahydrofolate = N(6)-[(R)-dihydrolipoyl]-L-lysyl-[protein] + (6R)-5,10-methylene-5,6,7,8-tetrahydrofolate + NH4(+). Its function is as follows. The glycine cleavage system catalyzes the degradation of glycine. The protein is Aminomethyltransferase of Prochlorococcus marinus (strain MIT 9303).